A 374-amino-acid chain; its full sequence is Patatin-2-Kuras 1 (374 aa).

A signal peptide spans 1–11 (MILATTGSTCA). Residues 20–217 (LSIDGGGIKG…TVGDPALLSL (198 aa)) enclose the PNPLA domain. Positions 24-29 (GGGIKG) match the GXGXXG motif. A GXSXG motif is present at residues 63-67 (GTSTG). Serine 65 serves as the catalytic Nucleophile. The N-linked (GlcNAc...) asparagine glycan is linked to asparagine 103. The Proton acceptor role is filled by aspartate 203. Positions 203-205 (DGA) match the DGA/G motif. Positions 309–372 (ENALTGTTTE…DRKKLRANKA (64 aa)) form a coiled coil.

Belongs to the patatin family. Tuber.

It localises to the vacuole. Probable lipolytic acyl hydrolase (LAH), an activity which is thought to be involved in the response of tubers to pathogens. In Solanum tuberosum (Potato), this protein is Patatin-2-Kuras 1 (pat2-k1).